Here is a 499-residue protein sequence, read N- to C-terminus: MTGQSAAVEGSNSALPWYRMGFHTLAEFNTYVTFVLLGMSIMMVTSAVTSAPDFVTKYFIYATGDPDAVAETPLFWNNANTFYNAGTYAMQVVTEIASLTPFMRSIPLGIRLFLGLGIPFVELVVIIAVPAATIPTQNGAIAVIMVVAMMGGLSKALCDSCTNALVGPFPTKFMNGAQWGLTVIALFMSIIQIILQVSMGSTFQDVLTISRIYFGIGIGIQVMAIAALVLLRYNPFAQKYIAEFRAAALRRRGHVEPEESQDSKEPATGDVAEAPKAGEKEVTLDAMEEADEVRAVPSDAFVAKSGAVLQATGDADRMVDLDQTKNITSTEQMLRASVWSVFKRIYPMLLCAFTIFFTTLLVFPGVFFLVPARSGWYMTIIVTLFNAGDFVARVLLMIRVLRPSPKLVIVGTFGRLAVIPLIVLCVRGFIPGVALPYVLIFLFGLTNGYFGTMSCIHCPRTPTLHYAGERSVAAMLAGISLMLGLCFGSNMSLAITLTY.

The Cytoplasmic segment spans residues 1-30 (MTGQSAAVEGSNSALPWYRMGFHTLAEFNT). 5 helical membrane passes run 31–51 (YVTF…VTSA), 112–132 (LFLG…VPAA), 133–153 (TIPT…MGGL), 179–199 (WGLT…QVSM), and 212–232 (IYFG…VLLR). Positions 255 to 267 (VEPEESQDSKEPA) are enriched in basic and acidic residues. The segment at 255 to 276 (VEPEESQDSKEPATGDVAEAPK) is disordered. N-linked (GlcNAc...) asparagine glycosylation is present at Asn-326. 5 helical membrane passes run 350–370 (LCAF…FFLV), 378–398 (MTII…LLMI), 406–426 (KLVI…VLCV), 428–448 (GFIP…LTNG), and 475–495 (MLAG…SLAI).

Belongs to the SLC29A/ENT transporter (TC 2.A.57) family.

Its subcellular location is the cell membrane. It localises to the cell projection. The protein localises to the cilium. The protein resides in the flagellum. It catalyses the reaction inosine(in) + H(+)(in) = inosine(out) + H(+)(out). It carries out the reaction guanosine(in) + H(+)(in) = guanosine(out) + H(+)(out). The catalysed reaction is xanthosine(in) + H(+)(in) = xanthosine(out) + H(+)(out). In terms of biological role, high affinity nucleoside:H(+) symporter; transports inosine and guanosine. Can transport xanthosine. The chain is Nucleoside transporter 2 from Leishmania donovani.